The following is a 1051-amino-acid chain: Ubiquitin-activating enzyme E1 1 (1051 aa).

A run of 2 repeats spans residues 56-194 (GRET…GSVF) and 453-605 (GSKL…QMVI). Residues 56 to 605 (GRETMKRLFG…GAKCNTQMVI (550 aa)) form a 2 approximate repeats region. ATP contacts are provided by residues A472, D498, R509, K522, and 570–571 (DN). Catalysis depends on C626, which acts as the Glycyl thioester intermediate.

Belongs to the ubiquitin-activating E1 family. In terms of assembly, monomer. The N-terminus is blocked.

It catalyses the reaction ATP + ubiquitin + [E1 ubiquitin-activating enzyme]-L-cysteine = AMP + diphosphate + S-ubiquitinyl-[E1 ubiquitin-activating enzyme]-L-cysteine.. It participates in protein modification; protein ubiquitination. Activates ubiquitin by first adenylating its C-terminal glycine residue with ATP, and thereafter linking this residue to the side chain of a cysteine residue in E1, yielding a ubiquitin-E1 thioester and free AMP. The sequence is that of Ubiquitin-activating enzyme E1 1 from Triticum aestivum (Wheat).